The chain runs to 359 residues: Histidinol-phosphate aminotransferase (359 aa).

Position 217 is an N6-(pyridoxal phosphate)lysine (lysine 217).

It belongs to the class-II pyridoxal-phosphate-dependent aminotransferase family. Histidinol-phosphate aminotransferase subfamily. Homodimer. Requires pyridoxal 5'-phosphate as cofactor.

The catalysed reaction is L-histidinol phosphate + 2-oxoglutarate = 3-(imidazol-4-yl)-2-oxopropyl phosphate + L-glutamate. It functions in the pathway amino-acid biosynthesis; L-histidine biosynthesis; L-histidine from 5-phospho-alpha-D-ribose 1-diphosphate: step 7/9. This chain is Histidinol-phosphate aminotransferase, found in Salmonella newport (strain SL254).